A 288-amino-acid chain; its full sequence is MSQISAKDVKNLRDITGAGMMDCKKALDETGGDMQQAIDYLRKKGAALAAKRADRDAREGMVEIKMTADHKAGIILELNCETDFVARGEDFTNFTVALGELALAKCISSPEALMTLTLGEAYGGETVDDAIKTMTGKLGEKISLKRLVYIDAGDGVVESYVHPGAQLGAIIHLATDQPDAVRELARDLAMQVAAAAPIVVDRSFVPADYIAKEAEIYRQQALEQGKKEAFVDKIVLGRLEKYYQDVVLSEQFFIKDSTVKVSDVLNEFRKKHQVKVDVIGFVRCKLGE.

Residues 82–85 (TDFV) form an involved in Mg(2+) ion dislocation from EF-Tu region.

Belongs to the EF-Ts family.

The protein resides in the cytoplasm. Functionally, associates with the EF-Tu.GDP complex and induces the exchange of GDP to GTP. It remains bound to the aminoacyl-tRNA.EF-Tu.GTP complex up to the GTP hydrolysis stage on the ribosome. The protein is Elongation factor Ts of Pelodictyon phaeoclathratiforme (strain DSM 5477 / BU-1).